The sequence spans 249 residues: 6-phosphogluconolactonase 3 (249 aa).

Belongs to the glucosamine/galactosamine-6-phosphate isomerase family. 6-phosphogluconolactonase subfamily.

Its subcellular location is the cytoplasm. The protein localises to the nucleus. It catalyses the reaction 6-phospho-D-glucono-1,5-lactone + H2O = 6-phospho-D-gluconate + H(+). It functions in the pathway carbohydrate degradation; pentose phosphate pathway; D-ribulose 5-phosphate from D-glucose 6-phosphate (oxidative stage): step 2/3. In terms of biological role, hydrolysis of 6-phosphogluconolactone to 6-phosphogluconate. The chain is 6-phosphogluconolactonase 3 (SOL3) from Saccharomyces cerevisiae (strain RM11-1a) (Baker's yeast).